The sequence spans 106 residues: MNRIYACPVADVPEGEALRIDTSPVIALFNVGGEFYAINDRCSHGNASMSEGYLEDDATVECPLHAASFCLKTGKALCLPATDPLTTYPVHVEGGDIFIDLPEAQP.

The Rieske domain maps to 4–99 (IYACPVADVP…VHVEGGDIFI (96 aa)). [2Fe-2S] cluster-binding residues include Cys42, His44, Cys62, and His65.

This sequence belongs to the bacterial ring-hydroxylating dioxygenase ferredoxin component family. In terms of assembly, this dioxygenase system consists of four proteins: the two subunits of the hydroxylase component (HcaE and HcaF), a ferredoxin (HcaC) and a ferredoxin reductase (HcaD). [2Fe-2S] cluster is required as a cofactor.

The protein operates within aromatic compound metabolism; 3-phenylpropanoate degradation. Functionally, part of the multicomponent 3-phenylpropionate dioxygenase, that converts 3-phenylpropionic acid (PP) and cinnamic acid (CI) into 3-phenylpropionate-dihydrodiol (PP-dihydrodiol) and cinnamic acid-dihydrodiol (CI-dihydrodiol), respectively. This protein seems to be a 2Fe-2S ferredoxin. In Escherichia coli O139:H28 (strain E24377A / ETEC), this protein is 3-phenylpropionate/cinnamic acid dioxygenase ferredoxin subunit.